Consider the following 156-residue polypeptide: Putative pre-16S rRNA nuclease (156 aa).

The protein belongs to the YqgF nuclease family.

It localises to the cytoplasm. In terms of biological role, could be a nuclease involved in processing of the 5'-end of pre-16S rRNA. The sequence is that of Putative pre-16S rRNA nuclease from Gloeobacter violaceus (strain ATCC 29082 / PCC 7421).